Consider the following 270-residue polypeptide: Transmembrane protein 176B (270 aa).

The next 4 membrane-spanning stretches (helical) occupy residues 65–85 (LALGVTQILLGVVSCVLGVCL), 95–115 (ASGCAFWAGSVVIAAGAGAIV), 127–147 (ISSLLTLAGFATAMAAVVLCV), and 209–229 (LFLAVCVLKVIVSLVSLGVGL). 4 positions are modified to phosphoserine: Ser-236, Ser-245, Ser-254, and Ser-258. The tract at residues 237–270 (SQPLNEEGSEKRLLGENSVPPSPSREQTSTAIVL) is disordered. Over residues 260 to 270 (SREQTSTAIVL) the composition is skewed to polar residues.

This sequence belongs to the TMEM176 family. Expressed in lung and dermal fibroblasts.

The protein localises to the nucleus membrane. Functionally, may play a role in the process of maturation of dendritic cells. Required for the development of cerebellar granule cells. In Homo sapiens (Human), this protein is Transmembrane protein 176B (TMEM176B).